A 185-amino-acid polypeptide reads, in one-letter code: Probable host range protein 2 (185 aa).

The protein belongs to the poxviridae C7 protein family.

In terms of biological role, plays a role for multiplication of the virus in different cell types. This chain is Probable host range protein 2, found in Swinepox virus (strain Kasza) (SWPV).